The following is a 247-amino-acid chain: L-cystine import ATP-binding protein TcyC (247 aa).

In terms of domain architecture, ABC transporter spans 2–240; that stretch reads LTVKGLNKSF…PKEERTQRFL (239 aa). ATP is bound at residue 34–41; the sequence is GPSGSGKT.

The protein belongs to the ABC transporter superfamily. L-cystine importer (TC 3.A.1.3.14) family. As to quaternary structure, the complex is composed of two ATP-binding proteins (TcyC), two transmembrane proteins (TcyB) and a solute-binding protein (TcyA).

The protein resides in the cell membrane. In terms of biological role, part of the ABC transporter complex TcyABC involved in L-cystine import. Responsible for energy coupling to the transport system. The protein is L-cystine import ATP-binding protein TcyC (tcyC) of Bacillus subtilis (strain 168).